A 177-amino-acid polypeptide reads, in one-letter code: Large ribosomal subunit protein uL6 (177 aa).

The protein belongs to the universal ribosomal protein uL6 family. Part of the 50S ribosomal subunit.

Its function is as follows. This protein binds to the 23S rRNA, and is important in its secondary structure. It is located near the subunit interface in the base of the L7/L12 stalk, and near the tRNA binding site of the peptidyltransferase center. The protein is Large ribosomal subunit protein uL6 of Novosphingobium aromaticivorans (strain ATCC 700278 / DSM 12444 / CCUG 56034 / CIP 105152 / NBRC 16084 / F199).